A 381-amino-acid chain; its full sequence is Odorant receptor 46a, isoform A (381 aa).

The Cytoplasmic portion of the chain corresponds to 1-37 (MSKGVEIFYKGQKAFLNILSLWPQIERRWRIIHQVNY). A helical membrane pass occupies residues 38–58 (VHVIVFWVLLFDLLLVLHVMA). A glycan (N-linked (GlcNAc...) asparagine) is linked at N59. Over 59-65 (NLSYMSE) the chain is Extracellular. A helical transmembrane segment spans residues 66–86 (VVKAIFILATSAGHTTKLLSI). The Cytoplasmic segment spans residues 87–127 (KANNVQMEELFRRLDNEEFRPRGANEELIFAAACERSRKLR). A helical membrane pass occupies residues 128 to 148 (DFYGALSFAALSMILIPQFAL). Over 149–170 (DWSHLPLKTYNPLGENTGSPAY) the chain is Extracellular. Residues 171 to 191 (WLLYCYQCLALSVSCITNIGF) traverse the membrane as a helical segment. At 192-255 (DSLCSSLFIF…KTVERLLCKP (64 aa)) the chain is on the cytoplasmic side. The chain crosses the membrane as a helical span at residues 256–276 (ISVQIFCSVLVLTANFYAIAV). Residues 277 to 287 (LSDERLELFKY) are Extracellular-facing. Residues 288 to 308 (VTYQACMLIQIFILCYYAGEV) traverse the membrane as a helical segment. The Cytoplasmic portion of the chain corresponds to 309-355 (TQRSLDLPHELYKTSWVDWDYRSRRIALLFMQRLHSTLRIRTLNPSL). Residues 356 to 376 (GFDLMLFSSIVNCSYSYFALL) traverse the membrane as a helical segment. At 377-381 (KRVNS) the chain is on the extracellular side.

This sequence belongs to the insect chemoreceptor superfamily. Heteromeric odorant receptor channel (TC 1.A.69) family. Or2a subfamily. As to quaternary structure, interacts with Orco. Complexes exist early in the endomembrane system in olfactory sensory neurons (OSNs), coupling these complexes to the conserved ciliary trafficking pathway. In terms of tissue distribution, isoform A is expressed in a subset of 17 olfactory receptor neurons in the maxillary palp.

The protein localises to the cell membrane. Odorant receptor which mediates acceptance or avoidance behavior, depending on its substrates. The odorant receptor repertoire encodes a large collection of odor stimuli that vary widely in identity, intensity, and duration. May form a complex with Orco to form odorant-sensing units, providing sensitive and prolonged odorant signaling and calcium permeability. The chain is Odorant receptor 46a, isoform A (Or46a) from Drosophila melanogaster (Fruit fly).